A 570-amino-acid polypeptide reads, in one-letter code: Pentatricopeptide repeat-containing protein At1g31430 (570 aa).

PPR repeat units follow at residues 10 to 44 (SLLM…GLYP), 45 to 79 (DNFT…GLEF), 80 to 110 (DSYV…MPQR), 111 to 141 (DVVS…MSQE), 147 to 177 (DEGT…VVTE), 181 to 215 (SVRI…NVKC), 216 to 242 (WTSM…SPVK), 243 to 277 (DVVL…GIRP), 278 to 312 (DNFV…RVTV), 313 to 343 (DKVV…IKER), 344 to 378 (DTAS…GVRL), 379 to 414 (DAIT…NVQP), and 415 to 449 (KSEH…SDET). The tract at residues 453–528 (VYCSLLSAAR…FPGCSSIEID (76 aa)) is type E motif. Positions 529-561 (GVGHEFIVGDDLLSHPKMDEINSMLHQTTNLML) are type E(+) motif.

Belongs to the PPR family. PCMP-E subfamily.

The sequence is that of Pentatricopeptide repeat-containing protein At1g31430 (PCMP-E55) from Arabidopsis thaliana (Mouse-ear cress).